The primary structure comprises 155 residues: MFVALPFLIFYASFSLLLGIYDARTGLLPDRFTCPLLWGGLLYHQICLPERLPDALWGAIAGYGGFALIYWGYRLRYQKEGLGYGDVKYLAALGAWHCWETLPLLVFLAAMLACGGFGVALLVRGKSALINPLPFGPWLAVAGFITGWKVFFPDG.

Belongs to the peptidase A24 family.

In Salmonella typhimurium (strain LT2 / SGSC1412 / ATCC 700720), this protein is Leader peptidase HopD (hopD).